The primary structure comprises 122 residues: MMGVVSLPRVIGKQVYGSLYECDTTVLGEQKVLEQIVRKAAEEGNMTLLDVKAWKIGDGVSIVAIVLESHITIHTWPEYNFATVDVYSCGSHTDPRKAFLYIVKELKARRYTMNEADRSSEF.

The active-site Schiff-base intermediate with substrate; via pyruvic acid is the Ser69. Position 69 is a pyruvic acid (Ser); by autocatalysis (Ser69). His74 functions as the Proton acceptor; for processing activity in the catalytic mechanism. Cys89 (proton donor; for catalytic activity) is an active-site residue.

This sequence belongs to the prokaryotic AdoMetDC family. Type 1 subfamily. As to quaternary structure, heterotetramer of two alpha and two beta chains arranged as a dimer of alpha/beta heterodimers. The cofactor is pyruvate. Post-translationally, is synthesized initially as an inactive proenzyme. Formation of the active enzyme involves a self-maturation process in which the active site pyruvoyl group is generated from an internal serine residue via an autocatalytic post-translational modification. Two non-identical subunits are generated from the proenzyme in this reaction, and the pyruvate is formed at the N-terminus of the alpha chain, which is derived from the carboxyl end of the proenzyme. The post-translation cleavage follows an unusual pathway, termed non-hydrolytic serinolysis, in which the side chain hydroxyl group of the serine supplies its oxygen atom to form the C-terminus of the beta chain, while the remainder of the serine residue undergoes an oxidative deamination to produce ammonia and the pyruvoyl group blocking the N-terminus of the alpha chain.

It catalyses the reaction S-adenosyl-L-methionine + H(+) = S-adenosyl 3-(methylsulfanyl)propylamine + CO2. Its pathway is amine and polyamine biosynthesis; S-adenosylmethioninamine biosynthesis; S-adenosylmethioninamine from S-adenosyl-L-methionine: step 1/1. Its function is as follows. Catalyzes the decarboxylation of S-adenosylmethionine to S-adenosylmethioninamine (dcAdoMet), the propylamine donor required for the synthesis of the polyamines spermine and spermidine from the diamine putrescine. The polypeptide is S-adenosylmethionine decarboxylase proenzyme (Sulfolobus acidocaldarius (strain ATCC 33909 / DSM 639 / JCM 8929 / NBRC 15157 / NCIMB 11770)).